The following is a 129-amino-acid chain: MADFQVVVGDDDGTAYSFEVDGQDANRFIGRAIGETVDGDAVGLPGYELEITGGSDQSGRPMHGDINGAETAAILSEGGVGFNPTVDGERKRVTVRGAEVSEDTRQINASIVSRGEQSIDDLLGGEDDE.

The tract at residues 106 to 129 (QINASIVSRGEQSIDDLLGGEDDE) is disordered.

It belongs to the eukaryotic ribosomal protein eS6 family.

The protein is Small ribosomal subunit protein eS6 of Natronomonas pharaonis (strain ATCC 35678 / DSM 2160 / CIP 103997 / JCM 8858 / NBRC 14720 / NCIMB 2260 / Gabara) (Halobacterium pharaonis).